A 417-amino-acid polypeptide reads, in one-letter code: Multifunctional CCA protein (417 aa).

ATP-binding residues include Gly-8 and Arg-11. Residues Gly-8 and Arg-11 each contribute to the CTP site. Mg(2+)-binding residues include Asp-21 and Asp-23. 3 residues coordinate ATP: Arg-91, Arg-137, and Arg-140. CTP-binding residues include Arg-91, Arg-137, and Arg-140. The HD domain maps to 225–326 (SGIHTLMTLQ…LNVLKKTDAF (102 aa)).

The protein belongs to the tRNA nucleotidyltransferase/poly(A) polymerase family. Bacterial CCA-adding enzyme type 1 subfamily. Monomer. Can also form homodimers and oligomers. It depends on Mg(2+) as a cofactor. Ni(2+) serves as cofactor.

The catalysed reaction is a tRNA precursor + 2 CTP + ATP = a tRNA with a 3' CCA end + 3 diphosphate. It catalyses the reaction a tRNA with a 3' CCA end + 2 CTP + ATP = a tRNA with a 3' CCACCA end + 3 diphosphate. Its function is as follows. Catalyzes the addition and repair of the essential 3'-terminal CCA sequence in tRNAs without using a nucleic acid template. Adds these three nucleotides in the order of C, C, and A to the tRNA nucleotide-73, using CTP and ATP as substrates and producing inorganic pyrophosphate. tRNA 3'-terminal CCA addition is required both for tRNA processing and repair. Also involved in tRNA surveillance by mediating tandem CCA addition to generate a CCACCA at the 3' terminus of unstable tRNAs. While stable tRNAs receive only 3'-terminal CCA, unstable tRNAs are marked with CCACCA and rapidly degraded. This is Multifunctional CCA protein from Neisseria meningitidis serogroup C (strain 053442).